Consider the following 102-residue polypeptide: Large ribosomal subunit protein bL21 (102 aa).

Belongs to the bacterial ribosomal protein bL21 family. In terms of assembly, part of the 50S ribosomal subunit. Contacts protein L20.

In terms of biological role, this protein binds to 23S rRNA in the presence of protein L20. In Listeria monocytogenes serotype 4b (strain CLIP80459), this protein is Large ribosomal subunit protein bL21.